Reading from the N-terminus, the 273-residue chain is MAAQALVSSSLTSSVQTARQIFGSKPVASASQKKSSFVVKAAATPPVKQGANRPLWFASSQSLSYLDGSLPGDYGFDPLGLSDPEGTGGFIEPRWLAYGEIINGRFAMLGAAGAIAPEILGKAGLIPAETALPWFQTGVIPPAGTYTYWADNYTLFVLEMALMGFAEHRRLQDWYNPGSMGKQYFLGLEKGLAGSGNPAYPGGPFFNPLGFGKDEKSLKELKLKEVKNGRLAMLAILGYFIQGLVTGVGPYQNLLDHLADPVNNNVLTSLKFH.

Residues 1-39 (MAAQALVSSSLTSSVQTARQIFGSKPVASASQKKSSFVV) constitute a chloroplast transit peptide. Trp-56 serves as a coordination point for chlorophyll b. Residues Phe-76, Ser-82, and Glu-100 each coordinate chlorophyll a. Arg-105 contributes to the chlorophyll b binding site. A helical membrane pass occupies residues 106-126 (FAMLGAAGAIAPEILGKAGLI). Position 140 (Ile-140) interacts with chlorophyll b. The helical transmembrane segment at 146 to 166 (YTYWADNYTLFVLEMALMGFA) threads the bilayer. The chlorophyll b site is built by Glu-167 and Arg-170. At Ser-195 the chain carries Phosphoserine. Residues Lys-224, Glu-225, Asn-228, Arg-230, Gln-242, and His-257 each contribute to the chlorophyll a site. A helical transmembrane segment spans residues 231-251 (LAMLAILGYFIQGLVTGVGPY). Residue Phe-272 participates in chlorophyll b binding.

This sequence belongs to the light-harvesting chlorophyll a/b-binding (LHC) protein family. The LHC complex consists of chlorophyll a-b binding proteins. Red-emitting heterodimer with LHCA2. Interacts with LHCA5. Binds to carotenoids. Requires Binds at least 14 chlorophylls (8 Chl-a and 6 Chl-b) and carotenoids such as lutein and neoxanthin. as cofactor. Post-translationally, photoregulated by reversible phosphorylation of its threonine residues.

It localises to the plastid. It is found in the chloroplast thylakoid membrane. Functionally, the light-harvesting complex (LHC) functions as a light receptor, it captures and delivers excitation energy to photosystems with which it is closely associated, here photosystem I. The sequence is that of Photosystem I chlorophyll a/b-binding protein 3-1, chloroplastic from Arabidopsis thaliana (Mouse-ear cress).